The primary structure comprises 458 residues: Cobyrinate a,c-diamide synthase (458 aa).

Residues 254 to 445 (KIGVIRDQVF…IHVHFLSDKS (192 aa)) form the GATase cobBQ-type domain. The active-site Nucleophile is C335.

It belongs to the CobB/CbiA family. It depends on Mg(2+) as a cofactor.

The catalysed reaction is cob(II)yrinate + 2 L-glutamine + 2 ATP + 2 H2O = cob(II)yrinate a,c diamide + 2 L-glutamate + 2 ADP + 2 phosphate + 2 H(+). It participates in cofactor biosynthesis; adenosylcobalamin biosynthesis; cob(II)yrinate a,c-diamide from sirohydrochlorin (anaerobic route): step 10/10. Functionally, catalyzes the ATP-dependent amidation of the two carboxylate groups at positions a and c of cobyrinate, using either L-glutamine or ammonia as the nitrogen source. The protein is Cobyrinate a,c-diamide synthase of Archaeoglobus fulgidus (strain ATCC 49558 / DSM 4304 / JCM 9628 / NBRC 100126 / VC-16).